We begin with the raw amino-acid sequence, 3019 residues long: Genome polyprotein (3019 aa).

Serine 2 carries the N-acetylserine; by host modification. Residues 2-23 are interaction with STAT1; it reads STLPKPQRITKRNINRRPQDVK. Residues 2–58 are interaction with EIF2AK2/PKR; the sequence is STLPKPQRITKRNINRRPQDVKFPGGGQIVGGVYVLPRRGPKLGVRAVRKTSERSQP. Positions 2 to 59 are interaction with DDX3X; it reads STLPKPQRITKRNINRRPQDVKFPGGGQIVGGVYVLPRRGPKLGVRAVRKTSERSQPR. The interval 2-75 is disordered; the sequence is STLPKPQRIT…PRARRTEGRS (74 aa). The Cytoplasmic segment spans residues 2–168; that stretch reads STLPKPQRIT…EDGINFATGN (167 aa). Short sequence motifs (nuclear localization signal) lie at residues 5–13 and 38–43; these read PKPQRITKR and PRRGPK. A Phosphoserine; by host modification is found at serine 53. 2 short sequence motifs (nuclear localization signal) span residues 58 to 64 and 66 to 71; these read PRSRRQP and PRARRT. Over residues 58 to 68 the composition is skewed to basic residues; the sequence is PRSRRQPIPRA. 2 positions are modified to phosphoserine; by host: serine 99 and serine 116. The segment at 112-152 is important for endoplasmic reticulum and mitochondrial localization; that stretch reads PRRRSRNLGKVIDTLTCGFADLMGYIPLVGAPVGGVARALA. The interaction with APOA2 stretch occupies residues 122 to 173; it reads VIDTLTCGFADLMGYIPLVGAPVGGVARALAHGVRALEDGINFATGNLPGCS. An important for lipid droplets localization region spans residues 164–167; that stretch reads FATG. The chain crosses the membrane as a helical span at residues 169-189; it reads LPGCSFSIFLLALLSCLLTPT. Residues 178–191 constitute a propeptide, ER anchor for the core protein, removed in mature form by host signal peptidase; the sequence is LLALLSCLLTPTAG. Residues 190–358 are Lumenal-facing; that stretch reads AGLEYRNASG…IGAHWGVMAG (169 aa). N-linked (GlcNAc...) asparagine; by host glycans are attached at residues asparagine 196, asparagine 209, and asparagine 234. Residues 265 to 296 are important for fusion; the sequence is MVGAATLCSALYVGDLCGALFLVGQGFSWRHR. A glycan (N-linked (GlcNAc...) asparagine; by host) is linked at asparagine 305. The chain crosses the membrane as a helical span at residues 359–379; sequence VAYYSMQGNWAKVFLVLCLFS. The Lumenal portion of the chain corresponds to 380–730; it reads GVDASTTITG…WEFVILIFLL (351 aa). Positions 385-412 are HVR1; sequence TTITGGVAASGAFTITSLFSTGAKQPLH. 3 N-linked (GlcNAc...) (high mannose) asparagine; by host glycosylation sites follow: asparagine 417, asparagine 423, and asparagine 430. 4 cysteine pairs are disulfide-bonded: cysteine 429–cysteine 553, cysteine 452–cysteine 459, cysteine 487–cysteine 495, and cysteine 504–cysteine 509. Asparagine 448 carries an N-linked (GlcNAc...) asparagine; by host glycan. An HVR2 region spans residues 475–479; the sequence is ANISG. The N-linked (GlcNAc...) asparagine; by host glycan is linked to asparagine 476. Residues 481–494 are CD81-binding 1; it reads SSEKPYCWHYAPRP. N-linked (GlcNAc...) asparagine; by host glycosylation occurs at asparagine 533. A CD81-binding 2 region spans residues 545 to 552; the sequence is PPTEPWFG. Asparagine 557 carries an N-linked (GlcNAc...) asparagine; by host glycan. 4 disulfide bridges follow: cysteine 565-cysteine 570, cysteine 586-cysteine 590, cysteine 602-cysteine 625, and cysteine 612-cysteine 649. N-linked (GlcNAc...) (high mannose) asparagine; by host glycans are attached at residues asparagine 628 and asparagine 650. Cysteine 657 and cysteine 682 are joined by a disulfide. The segment at 665–676 is PKR/eIF2-alpha phosphorylation homology domain (PePHD); the sequence is SEMYPLLHSTTE. The helical transmembrane segment at 731 to 751 threads the bilayer; the sequence is LADARVCVVLWMMMLISQAEA. At 752 to 762 the chain is on the lumenal side; it reads ALENLIVLNAI. The chain crosses the membrane as a helical span at residues 763–783; it reads SAAGTHGIWWSLVAFCVAWHV. Over 784–786 the chain is Cytoplasmic; sequence RGR. The helical transmembrane segment at 787 to 808 threads the bilayer; sequence IFPIAVYSIVGLWPLLLLVLML. Over 809–818 the chain is Lumenal; the sequence is PYRAYAWTGT. A helical membrane pass occupies residues 819–839; that stretch reads DTSTLGAGVLSLFALFTLSPW. At 840–843 the chain is on the cytoplasmic side; the sequence is YKHW. Residues 844-863 form a helical membrane-spanning segment; that stretch reads IARLIWWNQYTIARCEAALQ. At 864 to 886 the chain is on the lumenal side; that stretch reads IWVPPLLARGARDGIILLAGLFY. A helical transmembrane segment spans residues 887 to 907; that stretch reads PALVFDITKLLLAILGPLYIL. The region spanning 908-1031 is the Peptidase C18 domain; it reads QASLVRVPYF…DYRSMGWRLL (124 aa). Residues 908–1662 are Cytoplasmic-facing; it reads QASLVRVPYF…CMAADLEVAT (755 aa). The segment at 909–1211 is protease NS2-3; the sequence is ASLVRVPYFV…PVESLSAQTR (303 aa). Residue cysteine 927 is the site of S-palmitoyl cysteine; by host attachment. The interval 934–954 is interaction with host SCPS1; the sequence is TGGKYVQMVLLALARGFNTYL. Active-site for protease NS2 activity; shared with dimeric partner residues include histidine 957, glutamate 977, and cysteine 998. One can recognise a Peptidase S29 domain in the interval 1032-1213; that stretch reads APITAHAQQT…ESLSAQTRSP (182 aa). Catalysis depends on charge relay system; for serine protease NS3 activity residues histidine 1088 and aspartate 1112. Zn(2+) is bound by residues cysteine 1128 and cysteine 1130. The Charge relay system; for serine protease NS3 activity role is filled by serine 1170. Cysteine 1176 and histidine 1180 together coordinate Zn(2+). 1235–1242 is an ATP binding site; the sequence is APTGSGES. Serine 1242 and glutamate 1322 together coordinate Mg(2+). The DECH box motif lies at 1321 to 1324; sequence DECH. In terms of domain architecture, Helicase C-terminal spans 1366–1543; the sequence is NIEEVALTGE…ELTPSETTVR (178 aa). Residues 1482–1505 form a disordered region; that stretch reads VPQDAVSRSQRRGRTGRGKSGTYR. Positions 1491 to 1503 are RNA-binding; sequence QRRGRTGRGKSGT. The chain crosses the membrane as a helical span at residues 1663-1683; that stretch reads SAWVLLGGVMAALTAYCLSVG. The NS3-binding stretch occupies residues 1684–1695; it reads SVVIVGHLVLGG. At 1684–1810 the chain is on the cytoplasmic side; it reads SVVIVGHLVL…SVTSPLTTNQ (127 aa). The chain crosses the membrane as a helical span at residues 1811 to 1829; that stretch reads TLLFNIMGGWVASNLAPPP. The Lumenal segment spans residues 1830–1833; that stretch reads ASTA. Residues 1834–1854 traverse the membrane as a helical segment; sequence FVVSGLAGAAVGSIGLGKVLL. A topological domain (cytoplasmic) is located at residue aspartate 1855. Residues 1856–1876 traverse the membrane as a helical segment; sequence ILAGYGAGVAGALVAFKIMGG. Topologically, residues 1877–1886 are lumenal; that stretch reads EMPSTEDMVN. The helical transmembrane segment at 1887–1907 threads the bilayer; the sequence is LLPAILSPGALVVGVICAAIL. Residues 1908–1977 lie on the Cytoplasmic side of the membrane; that stretch reads RRHVGPGEGA…WINEDYPTPC (70 aa). Cysteine 1977 is lipidated: S-palmitoyl cysteine; by host. Residues 1978–2007 lie within the membrane without spanning it; sequence DGNWLYDIWNWVCTVLADFKLWLGAKILPK. Topologically, residues 2008–2998 are cytoplasmic; that stretch reads MPGIPFLSCQ…YHSVSRARSR (991 aa). Zn(2+) contacts are provided by cysteine 2016, cysteine 2034, cysteine 2036, and cysteine 2057. The FKBP8-binding stretch occupies residues 2125–2213; the sequence is EFFTELDGVR…ASSSASQLSA (89 aa). The segment at 2125–2337 is transcriptional activation; it reads EFFTELDGVR…PVPPPRRKRT (213 aa). Residues 2140-2144 form an interaction with non-structural protein 4A region; it reads PVCRP. The interval 2191-2225 is disordered; the sequence is AKRRLDRGSPPSLASSSASQLSAPSRKATCTTHGR. An interaction with host SKP2 region spans residues 2194–2446; it reads RLDRGSPPSL…ALITPCAAEE (253 aa). Phosphoserine; by host occurs at positions 2199, 2202, 2206, 2209, 2212, and 2215. Residues 2199–2215 show a composition bias toward low complexity; sequence SPPSLASSSASQLSAPS. Residues 2215–2254 are ISDR; it reads SRKATCTTHGRHPDAELITANLLWRQEMGSNITRVESESK. The interval 2215 to 2280 is interaction with EIF2AK2/PKR; that stretch reads SRKATCTTHG…DELSVAAECF (66 aa). Residues 2254-2311 are NS4B-binding; the sequence is KVVILDSFEPLRACDDEDELSVAAECFKKPPKYPPALPIWARPDYNPPLVEPWKDPDY. The segment at 2304 to 2382 is V3; it reads EPWKDPDYVP…GTQSGSLTGP (79 aa). The short motif at 2327 to 2330 is the SH3-binding element; the sequence is PPVP. Residues 2332–2340 carry the Nuclear localization signal motif; it reads PRRKRTIVL. Lysine 2355 is covalently cross-linked (Glycyl lysine isopeptide (Lys-Gly) (interchain with G-Cter in ubiquitin)). Positions 2356 to 2417 are disordered; that stretch reads SFPQPTCSAE…PDLSSGSWST (62 aa). A compositionally biased stretch (polar residues) spans 2369–2381; that stretch reads TSGVGTQSGSLTG. Phosphoserine; by host is present on residues serine 2457 and serine 2470. One can recognise a RdRp catalytic domain in the interval 2642-2760; sequence PLGFSYDTRC…IAESAGIDED (119 aa). 3 residues coordinate Mg(2+): aspartate 2648, aspartate 2746, and aspartate 2747. A helical membrane pass occupies residues 2999–3019; it reads HLLLGLLLLTVGVGIFLLPAR.

Belongs to the hepacivirus polyprotein family. In terms of assembly, homooligomer. Interacts with E1 (via C-terminus). Interacts with the non-structural protein 5A. Interacts (via N-terminus) with host STAT1 (via SH2 domain); this interaction results in decreased STAT1 phosphorylation and ubiquitin-mediated proteasome-dependent STAT1 degradation, leading to decreased IFN-stimulated gene transcription. Interacts with host STAT3; this interaction constitutively activates STAT3. Interacts with host LTBR receptor. Interacts with host TNFRSF1A receptor and possibly induces apoptosis. Interacts with host HNRPK. Interacts with host YWHAE. Interacts with host UBE3A/E6AP. Interacts with host DDX3X. Interacts with host APOA2. Interacts with host RXRA protein. Interacts with host SP110 isoform 3/Sp110b; this interaction sequesters the transcriptional corepressor SP110 away from the nucleus. Interacts with host CREB3 nuclear transcription protein; this interaction triggers cell transformation. Interacts with host ACY3. Interacts with host C1QR1. Interacts with host RBM24; this interaction, which enhances the interaction of the mature core protein with 5'-UTR, may inhibit viral translation and favor replication. Interacts with host EIF2AK2/PKR; this interaction induces the autophosphorylation of EIF2AK2. Part of the viral assembly initiation complex composed of NS2, E1, E2, NS3, NS4A, NS5A and the mature core protein. Forms a heterodimer with envelope glycoprotein E2. Interacts with mature core protein. Interacts with protease NS2. The heterodimer E1/E2 interacts with host CLDN1; this interaction plays a role in viral entry into host cell. Interacts with host SPSB2 (via C-terminus). Part of the viral assembly initiation complex composed of NS2, E1, E2, NS3, NS4A, NS5A and the mature core protein. Interacts with host NEURL3; this interaction prevents E1 binding to glycoprotein E2. As to quaternary structure, forms a heterodimer with envelope glycoprotein E1. Interacts with host CD81 and SCARB1 receptors; these interactions play a role in viral entry into host cell. Interacts with host EIF2AK2/PKR; this interaction inhibits EIF2AK2 and probably allows the virus to evade the innate immune response. Interacts with host CD209/DC-SIGN and CLEC4M/DC-SIGNR. Interact with host SPCS1; this interaction is essential for viral particle assembly. Interacts with protease NS2. The heterodimer E1/E2 interacts with host CLDN1; this interaction plays a role in viral entry into host cell. Part of the viral assembly initiation complex composed of NS2, E1, E2, NS3, NS4A, NS5A and the mature core protein. Interacts with host SLC3A2/4F2hc; the interaction may facilitate viral entry into host cell. Interacts with human PLSCR1. In terms of assembly, homohexamer. Homoheptamer. Interacts with protease NS2. Homodimer. Interacts with host SPCS1; this interaction is essential for viral particle assembly. Interacts with envelope glycoprotein E1. Interacts with envelope glycoprotein E2. Interacts with viroporin p7. Interacts with serine protease/helicase NS3. Part of the replication complex composed of NS2, NS3, NS4A, NS4B, NS5A and the RNA-directed RNA polymerase embedded in an ER-derived membranous web. Part of the viral assembly initiation complex composed of NS2, E1, E2, NS3, NS4A, NS5A and the mature core protein. As to quaternary structure, interacts with protease NS2. Interacts with non-structural protein 4A; this interaction stabilizes the folding of NS3 serine protease. NS3-NS4A interaction is essential for NS3 activation and allows membrane anchorage of the latter. NS3/NS4A complex also prevents phosphorylation of host IRF3, thus preventing the establishment of dsRNA induced antiviral state. Interacts with host MAVS; this interaction leads to the cleavage and inhibition of host MAVS. Interacts with host TICAM1; this interaction leads to the cleavage and inhibition of host TICAM1. Interacts with host TANK-binding kinase/TBK1; this interaction results in the inhibition of the association between TBK1 and IRF3, which leads to the inhibition of IRF3 activation. Interacts with host RBM24. Part of the replication complex composed of NS2, NS3, NS4A, NS4B, NS5A and the RNA-directed RNA polymerase embedded in an ER-derived membranous web. Part of the viral assembly initiation complex composed of NS2, E1, E2, NS3, NS4A, NS5A and the mature core protein. In terms of assembly, interacts with NS3 serine protease; this interaction stabilizes the folding of NS3 serine protease. NS3-NS4A interaction is essential for NS3 activation and allows membrane anchorage of the latter. Interacts with non-structural protein 5A (via N-terminus). Part of the replication complex composed of NS2, NS3, NS4A, NS4B, NS5A and the RNA-directed RNA polymerase embedded in an ER-derived membranous web. Part of the viral assembly initiation complex composed of NS2, E1, E2, NS3, NS4A, NS5A and the mature core protein. Homomultimer. Interacts with non-structural protein NS5A. Interacts with host PLA2G4C; this interaction likely initiates the recruitment of replication complexes to lipid droplets. Interacts with host STING; this interaction disrupts the interaction between STING and TBK1 thereby suppressing the interferon signaling. Part of the replication complex composed of NS2, NS3, NS4A, NS4B, NS5A and the RNA-directed RNA polymerase embedded in an ER-derived membranous web. As to quaternary structure, monomer. Homodimer; dimerization is required for RNA-binding. Interacts with the mature core protein. Interacts (via N-terminus) with non-structural protein 4A. Interacts with non-structural protein 4B. Interacts (via region D2) with RNA-directed RNA polymerase. Part of the viral assembly initiation complex composed of NS2, E1, E2, NS3, NS4A, NS5A and the mature core protein. Part of the replication complex composed of NS2, NS3, NS4A, NS4B, NS5A and the RNA-directed RNA polymerase embedded in an ER-derived membranous web. Interacts with host GRB2. Interacts with host BIN1. Interacts with host PIK3R1. Interacts with host SRCAP. Interacts with host FKBP8. Interacts (via C-terminus) with host VAPB (via MSP domain). Interacts with host EIF2AK2/PKR; this interaction leads to disruption of EIF2AK2 dimerization by NS5A and probably allows the virus to evade the innate immune response. Interacts (via N-terminus) with host PACSIN2 (via N-terminus); this interaction attenuates protein kinase C alpha-mediated phosphorylation of PACSIN2 by disrupting the interaction between PACSIN2 and PRKCA. Interacts (via N-terminus) with host SRC kinase (via SH2 domain). Interacts with most Src-family kinases. Interacts with host IFI27 and SKP2; promotes the ubiquitin-mediated proteasomal degradation of NS5A. Interacts with host GPS2. Interacts with host TNFRSF21; this interaction allows the modulation by the virus of JNK, p38 MAPK, STAT3, and Akt signaling pathways in a DR6-dependent manner. Interacts (via N-terminus) with host CIDEB (via N-terminus); this interaction seems to regulate the association of HCV particles with APOE. Interacts with host CHKA/Choline Kinase-alpha; CHKA bridges host PI4KA and NS5A and potentiates NS5A-stimulated PI4KA activity, which then facilitates the targeting of the ternary complex to the ER for viral replication. Interacts with host SPSB2 (via C-terminus); this interaction targets NS5A for ubiquitination and degradation. Interacts with host RAB18; this interaction may promote the association of NS5A and other replicase components with lipid droplets. Interacts (via region D2) with host PPIA/CYPA; the interaction stimulates RNA-binding ability of NS5A and is dependent on the peptidyl-prolyl cis-trans isomerase activity of PPIA/CYPA. Interacts with host TRIM14; this interaction induces the degradation of NS5A. In terms of assembly, homooligomer. Interacts with non-structural protein 5A. Interacts with host VAPB. Interacts with host PRK2/PKN2. Interacts with host HNRNPA1 and SEPT6; these interactions facilitate viral replication. Part of the replication complex composed of NS2, NS3, NS4A, NS4B, NS5A and the RNA-directed RNA polymerase. The cofactor is Zn(2+). It depends on Mg(2+) as a cofactor. Post-translationally, specific enzymatic cleavages in vivo yield mature proteins. The structural proteins, core, E1, E2 and p7 are produced by proteolytic processing by host signal peptidases. The core protein precursor is synthesized as a 23 kDa, which is retained in the ER membrane through the hydrophobic signal peptide. Cleavage by the signal peptidase releases the 21 kDa mature core protein. The cleavage of the core protein precursor occurs between aminoacids 176 and 188 but the exact cleavage site is not known. Some degraded forms of the core protein appear as well during the course of infection. The other proteins (p7, NS2, NS3, NS4A, NS4B, NS5A and NS5B) are cleaved by the viral proteases. Autoprocessing between NS2 and NS3 is mediated by the NS2 cysteine protease catalytic domain and regulated by the NS3 N-terminal domain. In terms of processing, phosphorylated by host PKC and PKA. Ubiquitinated; mediated by UBE3A and leading to core protein subsequent proteasomal degradation. Post-translationally, highly N-glycosylated. In terms of processing, palmitoylation is required for NS2/3 autoprocessing and E2 recruitment to membranes. Palmitoylated. This modification may play a role in its polymerization or in protein-protein interactions. Post-translationally, phosphorylated on serines in a basal form termed p56. p58 is a hyperphosphorylated form of p56. p56 and p58 coexist in the cell in roughly equivalent amounts. Hyperphosphorylation is dependent on the presence of NS4A. Host CSNK1A1/CKI-alpha or RPS6KB1 kinases may be responsible for NS5A phosphorylation. In terms of processing, tyrosine phosphorylation is essential for the interaction with host SRC. Ubiquitinated. Ubiquitination, most probably at Lys-2355, mediated by host IFI27 and SKP2 leads to proteasomal degradation, restricting viral infection. Ubiquitination by host TRIM22 leads to interruption of viral replication. Post-translationally, the N-terminus is phosphorylated by host PRK2/PKN2.

The protein resides in the host endoplasmic reticulum membrane. It localises to the host mitochondrion membrane. It is found in the virion. Its subcellular location is the host cytoplasm. The protein localises to the host nucleus. The protein resides in the host lipid droplet. It localises to the virion membrane. It is found in the host mitochondrion. Its subcellular location is the host cell membrane. The protein localises to the host perinuclear region. The enzyme catalyses Hydrolysis of four peptide bonds in the viral precursor polyprotein, commonly with Asp or Glu in the P6 position, Cys or Thr in P1 and Ser or Ala in P1'.. It carries out the reaction a ribonucleoside 5'-triphosphate + H2O = a ribonucleoside 5'-diphosphate + phosphate + H(+). The catalysed reaction is ATP + H2O = ADP + phosphate + H(+). It catalyses the reaction RNA(n) + a ribonucleoside 5'-triphosphate = RNA(n+1) + diphosphate. Inhibited by the antiviral drug hexamethylene amiloride. Inhibition by amantadine appears to be genotype-dependent. Also inhibited by long-alkyl-chain iminosugar derivatives. With respect to regulation, activity is up-regulated by PRK2/PKN2-mediated phosphorylation. Its function is as follows. Packages viral RNA to form a viral nucleocapsid, and promotes virion budding. Participates in the viral particle production as a result of its interaction with the non-structural protein 5A. Binds RNA and may function as a RNA chaperone to induce the RNA structural rearrangements taking place during virus replication. Modulates viral translation initiation by interacting with viral IRES and 40S ribosomal subunit. Affects various cell signaling pathways, host immunity and lipid metabolism. Prevents the establishment of cellular antiviral state by blocking the interferon-alpha/beta (IFN-alpha/beta) and IFN-gamma signaling pathways and by blocking the formation of phosphorylated STAT1 and promoting ubiquitin-mediated proteasome-dependent degradation of STAT1. Activates STAT3 leading to cellular transformation. Regulates the activity of cellular genes, including c-myc and c-fos. May repress the promoter of p53, and sequester CREB3 and SP110 isoform 3/Sp110b in the cytoplasm. Represses cell cycle negative regulating factor CDKN1A, thereby interrupting an important check point of normal cell cycle regulation. Targets transcription factors involved in the regulation of inflammatory responses and in the immune response: suppresses TNF-induced NF-kappa-B activation, and activates AP-1. Binds to dendritic cells (DCs) via C1QR1, resulting in down-regulation of T-lymphocytes proliferation. Alters lipid metabolism by interacting with hepatocellular proteins involved in lipid accumulation and storage. Induces up-regulation of FAS promoter activity, and thereby contributes to the increased triglyceride accumulation in hepatocytes (steatosis). In terms of biological role, forms a heterodimer with envelope glycoprotein E2, which mediates virus attachment to the host cell, virion internalization through clathrin-dependent endocytosis and fusion with host membrane. Fusion with the host cell is most likely mediated by both E1 and E2, through conformational rearrangements of the heterodimer required for fusion rather than a classical class II fusion mechanism. E1/E2 heterodimer binds host apolipoproteins such as APOB and ApoE thereby forming a lipo-viro-particle (LVP). APOE associated to the LVP allows the initial virus attachment to cell surface receptors such as the heparan sulfate proteoglycans (HSPGs), syndecan-1 (SDC1), syndecan-1 (SDC2), the low-density lipoprotein receptor (LDLR) and scavenger receptor class B type I (SCARB1). The cholesterol transfer activity of SCARB1 allows E2 exposure and binding of E2 to SCARB1 and the tetraspanin CD81. E1/E2 heterodimer binding on CD81 activates the epithelial growth factor receptor (EGFR) signaling pathway. Diffusion of the complex E1-E2-EGFR-SCARB1-CD81 to the cell lateral membrane allows further interaction with Claudin 1 (CLDN1) and occludin (OCLN) to finally trigger HCV entry. Functionally, forms a heterodimer with envelope glycoprotein E1, which mediates virus attachment to the host cell, virion internalization through clathrin-dependent endocytosis and fusion with host membrane. Fusion with the host cell is most likely mediated by both E1 and E2, through conformational rearrangements of the heterodimer required for fusion rather than a classical class II fusion mechanism. The interaction between envelope glycoprotein E2 and host apolipoprotein E/APOE allows the proper assembly, maturation and infectivity of the viral particles. This interaction is probably promoted via the up-regulation of cellular autophagy by the virus. E1/E2 heterodimer binds host apolipoproteins such as APOB and APOE thereby forming a lipo-viro-particle (LVP). APOE associated to the LVP allows the initial virus attachment to cell surface receptors such as the heparan sulfate proteoglycans (HSPGs), syndecan-1 (SDC1), syndecan-1 (SDC2), the low-density lipoprotein receptor (LDLR) and scavenger receptor class B type I (SCARB1). The cholesterol transfer activity of SCARB1 allows E2 exposure and binding of E2 to SCARB1 and the tetraspanin CD81. E1/E2 heterodimer binding on CD81 activates the epithelial growth factor receptor (EGFR) signaling pathway. Diffusion of the complex E1-E2-EGFR-SCARB1-CD81 to the cell lateral membrane allows further interaction with Claudin 1 (CLDN1) and occludin (OCLN) to finally trigger HCV entry. Inhibits host EIF2AK2/PKR activation, preventing the establishment of an antiviral state. Viral ligand for CD209/DC-SIGN and CLEC4M/DC-SIGNR, which are respectively found on dendritic cells (DCs), and on liver sinusoidal endothelial cells and macrophage-like cells of lymph node sinuses. These interactions allow the capture of circulating HCV particles by these cells and subsequent facilitated transmission to permissive cells such as hepatocytes and lymphocyte subpopulations. The interaction between E2 and host amino acid transporter complex formed by SLC3A2 and SLC7A5/LAT1 may facilitate viral entry into host cell. Ion channel protein that acts as a viroporin and plays an essential role in the assembly, envelopment and secretion of viral particles. Regulates the host cell secretory pathway, which induces the intracellular retention of viral glycoproteins and favors assembly of viral particles. Creates a pore in acidic organelles and releases Ca(2+) and H(+) in the cytoplasm of infected cells, leading to a productive viral infection. High levels of cytoplasmic Ca(2+) may trigger membrane trafficking and transport of viral ER-associated proteins to viroplasms, sites of viral genome replication. This ionic imbalance induces the assembly of the inflammasome complex, which triggers the maturation of pro-IL-1beta into IL-1beta through the action of caspase-1. Targets also host mitochondria and induces mitochondrial depolarization. In addition of its role as a viroporin, acts as a lipid raft adhesion factor. Its function is as follows. Cysteine protease required for the proteolytic auto-cleavage between the non-structural proteins NS2 and NS3. The N-terminus of NS3 is required for the function of NS2 protease (active region NS2-3). Promotes the initiation of viral particle assembly by mediating the interaction between structural and non-structural proteins. In terms of biological role, displays three enzymatic activities: serine protease with a chymotrypsin-like fold, NTPase and RNA helicase. NS3 serine protease, in association with NS4A, is responsible for the cleavages of NS3-NS4A, NS4A-NS4B, NS4B-NS5A and NS5A-NS5B. The NS3/NS4A complex prevents phosphorylation of host IRF3, thus preventing the establishment of dsRNA induced antiviral state. The NS3/NS4A complex induces host amino acid transporter component SLC3A2, thus contributing to HCV propagation. NS3 RNA helicase binds to RNA and unwinds both dsDNA and dsRNA in the 3' to 5' direction, and likely resolves RNA complicated stable secondary structures in the template strand. Binds a single ATP and catalyzes the unzipping of a single base pair of dsRNA. Inhibits host antiviral proteins TBK1 and IRF3 thereby preventing the establishment of an antiviral state. Cleaves host MAVS/CARDIF thereby preventing the establishment of an antiviral state. Cleaves host TICAM1/TRIF, thereby disrupting TLR3 signaling and preventing the establishment of an antiviral state. Functionally, induces a specific membrane alteration that serves as a scaffold for the virus replication complex. This membrane alteration gives rise to the so-called ER-derived membranous web that contains the replication complex. NS4B self-interaction contributes to its function in membranous web formation. Promotes host TRIF protein degradation in a CASP8-dependent manner thereby inhibiting host TLR3-mediated interferon signaling. Disrupts the interaction between STING and TBK1 contributing to the inhibition of interferon signaling. Phosphorylated protein that is indispensable for viral replication and assembly. Both hypo- and hyperphosphorylated states are required for the viral life cycle. The hyperphosphorylated form of NS5A is an inhibitor of viral replication. Involved in RNA-binding and especially in binding to the viral genome. Zinc is essential for RNA-binding. Participates in the viral particle production as a result of its interaction with the mature viral core protein. Its interaction with host VAPB may target the viral replication complex to vesicles. Down-regulates viral IRES translation initiation. Mediates interferon resistance, presumably by interacting with and inhibiting host EIF2AK2/PKR. Prevents BIN1-induced apoptosis. Acts as a transcriptional activator of some host genes important for viral replication when localized in the nucleus. Via the interaction with host PACSIN2, modulates lipid droplet formation in order to promote virion assembly. Modulates TNFRSF21/DR6 signaling pathway for viral propagation. Its function is as follows. RNA-dependent RNA polymerase that performs primer-template recognition and RNA synthesis during viral replication. Initiates RNA transcription/replication at a flavin adenine dinucleotide (FAD), resulting in a 5'- FAD cap on viral RNAs. In this way, recognition of viral 5' RNA by host pattern recognition receptors can be bypassed, thereby evading activation of antiviral pathways. The polypeptide is Genome polyprotein (Homo sapiens (Human)).